The sequence spans 322 residues: Acetylglutamate kinase (322 aa).

Residues Gly85–Gly86, Arg107, and Asn211 each bind substrate.

This sequence belongs to the acetylglutamate kinase family. ArgB subfamily.

It localises to the cytoplasm. It catalyses the reaction N-acetyl-L-glutamate + ATP = N-acetyl-L-glutamyl 5-phosphate + ADP. Its pathway is amino-acid biosynthesis; L-arginine biosynthesis; N(2)-acetyl-L-ornithine from L-glutamate: step 2/4. Catalyzes the ATP-dependent phosphorylation of N-acetyl-L-glutamate. This Methanosarcina barkeri (strain Fusaro / DSM 804) protein is Acetylglutamate kinase.